Consider the following 1029-residue polypeptide: Beta-galactosidase 2 (1029 aa).

The substrate site is built by Asn104 and Asp203. Asp203 is a Na(+) binding site. Mg(2+)-binding residues include Glu418, His420, and Glu463. Residues Glu463 and 539 to 542 (EYAH) contribute to the substrate site. Glu463 acts as the Proton donor in catalysis. The Nucleophile role is filled by Glu539. Asn599 contributes to the Mg(2+) binding site. Residues Phe603 and Asn606 each contribute to the Na(+) site. Residues Asn606 and Trp1004 each coordinate substrate.

The protein belongs to the glycosyl hydrolase 2 family. As to quaternary structure, homotetramer. Requires Mg(2+) as cofactor. Na(+) is required as a cofactor.

The enzyme catalyses Hydrolysis of terminal non-reducing beta-D-galactose residues in beta-D-galactosides.. The chain is Beta-galactosidase 2 from Enterobacter cloacae.